A 488-amino-acid chain; its full sequence is Nitrogen metabolite repression protein nmr (488 aa).

The interval 1 to 45 is disordered; that stretch reads MPAEILSELPLRPAPRDIKIPNAMHNEERRHKHSRSSYSEMSPLM. Residues 14-29 show a composition bias toward basic and acidic residues; that stretch reads APRDIKIPNAMHNEER. Residues 36–45 are compositionally biased toward polar residues; it reads SSYSEMSPLM. Residues 71-76, Asn-165, Lys-215, and 237-240 contribute to the NADP(+) site; these read NAAGRQ and YNNN. NAD(+) contacts are provided by residues 75–76, 165–167, Lys-215, and 237–240; these read RQ, NTT, and YNNN. Positions 412-488 are dispensable for NMR function; sequence EEYDGGGGNN…NKRADEEWLA (77 aa). A disordered region spans residues 422–488; that stretch reads IGNNHNNHHQ…NKRADEEWLA (67 aa). Residues 438–459 show a composition bias toward low complexity; the sequence is HQNGHQNGHNGINGHIVNGGVD. Over residues 460 to 473 the composition is skewed to acidic residues; the sequence is SESEEEDSDSDDEG.

This sequence belongs to the NmrA-type oxidoreductase family. In terms of assembly, interacts with nit-2.

The protein localises to the nucleus. Its function is as follows. May be a redox sensor protein. Negative transcriptional regulator involved in the post-transcriptional modulation of the GATA-type transcription factor nit-2, forming part of a system controlling nitrogen metabolite repression. This chain is Nitrogen metabolite repression protein nmr (nmr), found in Neurospora crassa (strain ATCC 24698 / 74-OR23-1A / CBS 708.71 / DSM 1257 / FGSC 987).